Consider the following 762-residue polypeptide: LON peptidase N-terminal domain and RING finger protein 1 (762 aa).

The disordered stretch occupies residues 1–35 (MSSPAVARASPGGNREASGGPRSRNGPWEVGGGGE). The TPR 1 repeat unit spans residues 47–80 (WELLLRRGELLALGGHLKGALEAFAAALRRGAPA). The segment at 118–154 (CLSCRGFLSEPVTVPCGHSYCRRCLRRELRARCRLCR) adopts an RING-type 1 zinc-finger fold. 3 TPR repeats span residues 201–233 (ARAA…EPSD), 235–267 (TLKI…LPNW), and 268–301 (PEVY…DEDF). Position 420 is a phosphoserine (S420). Residues 468 to 506 (CSLCMRLFFEPVTTPCGHSFCKNCLERCLDHAPYCPLCK) form an RING-type 2 zinc finger. Residues 547 to 757 (TAELSHLTKN…KIQHILTYFS (211 aa)) enclose the Lon N-terminal domain.

The sequence is that of LON peptidase N-terminal domain and RING finger protein 1 (Lonrf1) from Mus musculus (Mouse).